A 129-amino-acid polypeptide reads, in one-letter code: Large ribosomal subunit protein uL22 (129 aa).

The protein belongs to the universal ribosomal protein uL22 family. Part of the 50S ribosomal subunit.

Functionally, this protein binds specifically to 23S rRNA; its binding is stimulated by other ribosomal proteins, e.g. L4, L17, and L20. It is important during the early stages of 50S assembly. It makes multiple contacts with different domains of the 23S rRNA in the assembled 50S subunit and ribosome. In terms of biological role, the globular domain of the protein is located near the polypeptide exit tunnel on the outside of the subunit, while an extended beta-hairpin is found that lines the wall of the exit tunnel in the center of the 70S ribosome. In Rhizobium meliloti (strain 1021) (Ensifer meliloti), this protein is Large ribosomal subunit protein uL22.